Reading from the N-terminus, the 583-residue chain is Ankyrin repeat and SOCS box protein 15 (583 aa).

ANK repeat units follow at residues 75-104, 110-139, 143-172, 176-205, 209-238, 242-271, 275-304, 307-336, 349-378, 379-408, and 416-444; these read KGWF…KTLW, DGET…WPNT, KGET…SLDQ, KRWS…NVHL, FGVT…DVFA, DGAS…SGNV, AGHL…KHAI, SGLT…DVNA, ERKT…DPNL, DPLN…NVNC, and TRFP…QVEL. The SOCS box domain occupies 524 to 579; the sequence is WPEIRQIIENPCSLKHLCRLKIRRVMGLQRLCQPASIQMLPLPAAMRRYLLFKEFD.

This sequence belongs to the ankyrin SOCS box (ASB) family.

The protein operates within protein modification; protein ubiquitination. Functionally, may be a substrate-recognition component of a SCF-like ECS (Elongin-Cullin-SOCS-box protein) E3 ubiquitin-protein ligase complex which mediates the ubiquitination and subsequent proteasomal degradation of target proteins. This is Ankyrin repeat and SOCS box protein 15 (Asb15) from Mus musculus (Mouse).